Reading from the N-terminus, the 276-residue chain is Undecaprenyl-diphosphatase 1 (276 aa).

Transmembrane regions (helical) follow at residues 4-24 (ILICKALILGVVEGLTEFLPV), 46-63 (TFDVVIQFGAILAVCWEY), 83-103 (FTLNVVIATIPAIALGLLFEK), 108-128 (VLFSPVPVAFALVVGGAIILW), 187-207 (VATEFSFFLAIPIIFGATLYE), 217-237 (VDSLGLFVLGAVAAFVSAFVC), and 252-272 (VFAWYRIAFGLFVLLVGYSGW).

The protein belongs to the UppP family.

It is found in the cell inner membrane. It carries out the reaction di-trans,octa-cis-undecaprenyl diphosphate + H2O = di-trans,octa-cis-undecaprenyl phosphate + phosphate + H(+). Catalyzes the dephosphorylation of undecaprenyl diphosphate (UPP). Confers resistance to bacitracin. This is Undecaprenyl-diphosphatase 1 from Burkholderia lata (strain ATCC 17760 / DSM 23089 / LMG 22485 / NCIMB 9086 / R18194 / 383).